Consider the following 970-residue polypeptide: MLRLSLPPNVSMGFRLVALVALLFSHVDHITADTEAETGGNETTECTGSYYCKKGVILPIWEPQDPSFGDKIARATVYFVAMVYMFLGVSIIADRFMSSIEVITSQEKEITIKKPNGETTKTTVRIWNETVSNLTLMALGSSAPEILLSVIEVCGHNFTAGDLGPSTIVGSAAFNMFIIIALCVYVVPDGETRKIKHLRVFFVTAAWSIFAYTWLYIILSVSSPGVVEVWEGLLTFFFFPICVVFAWVADRRLLFYKYVYKRYRAGKQRGMIIEHEGDRPASKTEIEMDGKVVNSHVDNFLDGALVLEVDERDQDDEEARREMARILKELKQKHPEKEIEQLIELANYQVLSQQQKSRAFYRIQATRLMTGAGNILKRHAADQARKAVSMHEVNMEMAENDPVSKIFFEQGTYQCLENCGTVALTIMRRGGDLSTTVFVDFRTEDGTANAASDYEFTEGTVIFKPGETQKEIRVGIIDDDIFEEDENFLVHLSNVRVSSDVSEDGILESNHASSIACLGSPSTATITIFDDDHAGIFTFEEPVTHVSESIGIMEVKVLRTSGARGNVIIPYKTIEGTARGGGEDFEDTCGEPEFQNDEIVKTISVKVIDDEEYEKNKTFFIEIGEPRLVEMSEKKALLLNELGGFTLTGKEMYGQPIFRKVHARDHPIPSTVITISEEYDDKQPLTSKEEEERRIAEMGRPILGEHTKLEVIIQESYEFKSTVDKLIKKTNLALVVGTNSWREQFIEAITVSAGEDDDDDECGEEKLPSCFDYVMHFLTVFWKVLFAFVPPTEYWNGWACFIVSILMIGLLTAFIGDLASHFGCTIGLKDSVTAVVFVALGTSVPDTFASKVAATQDQYADASIGNVTGSNAVNVFLGIGVAWSIAAIYHAANGEQFKVSPGTLAFSVTLFTIFAFINVGVLLYRRRPEIGGELGGPRTAKLLTSSLFVLLWLLYIFFSSLEAYCHIKGF.

The N-terminal stretch at 1–32 (MLRLSLPPNVSMGFRLVALVALLFSHVDHITA) is a signal peptide. Residues 33 to 71 (DTEAETGGNETTECTGSYYCKKGVILPIWEPQDPSFGDK) lie on the Extracellular side of the membrane. Residue Asn-41 is glycosylated (N-linked (GlcNAc...) asparagine). A helical membrane pass occupies residues 72–92 (IARATVYFVAMVYMFLGVSII). The Cytoplasmic portion of the chain corresponds to 93–133 (ADRFMSSIEVITSQEKEITIKKPNGETTKTTVRIWNETVSN). The chain crosses the membrane as a helical span at residues 134 to 154 (LTLMALGSSAPEILLSVIEVC). One copy of the Alpha-1 repeat lies at 138–178 (ALGSSAPEILLSVIEVCGHNFTAGDLGPSTIVGSAAFNMFI). Over 155–167 (GHNFTAGDLGPST) the chain is Extracellular. Residue Asn-157 is glycosylated (N-linked (GlcNAc...) asparagine). The helical transmembrane segment at 168-188 (IVGSAAFNMFIIIALCVYVVP) threads the bilayer. Residues 189–201 (DGETRKIKHLRVF) lie on the Cytoplasmic side of the membrane. Residues 202 to 222 (FVTAAWSIFAYTWLYIILSVS) form a helical membrane-spanning segment. The Extracellular portion of the chain corresponds to 223 to 228 (SPGVVE). Residues 229 to 249 (VWEGLLTFFFFPICVVFAWVA) traverse the membrane as a helical segment. Residues 250 to 797 (DRRLLFYKYV…FVPPTEYWNG (548 aa)) are Cytoplasmic-facing. The segment at 251–270 (RRLLFYKYVYKRYRAGKQRG) is putative calmodulin-binding region. Phosphoserine is present on residues Ser-282 and Ser-389. Calx-beta domains are found at residues 393-493 (VNME…VHLS) and 524-624 (ATIT…IEIG). Ca(2+) contacts are provided by Glu-417, Asp-453, Asp-478, Asp-479, Ile-481, Glu-483, Glu-486, Asp-530, Asp-531, Asp-532, Glu-548, Asp-584, Asp-610, Glu-611, Glu-612, and Glu-715. The helical transmembrane segment at 798–818 (WACFIVSILMIGLLTAFIGDL) threads the bilayer. Topologically, residues 819-821 (ASH) are extracellular. The chain crosses the membrane as a helical span at residues 822–842 (FGCTIGLKDSVTAVVFVALGT). The stretch at 839–875 (ALGTSVPDTFASKVAATQDQYADASIGNVTGSNAVNV) is one Alpha-2 repeat. The Cytoplasmic portion of the chain corresponds to 843–871 (SVPDTFASKVAATQDQYADASIGNVTGSN). Residues 872–892 (AVNVFLGIGVAWSIAAIYHAA) traverse the membrane as a helical segment. Topologically, residues 893–903 (NGEQFKVSPGT) are extracellular. A helical membrane pass occupies residues 904–924 (LAFSVTLFTIFAFINVGVLLY). The Cytoplasmic segment spans residues 925–941 (RRRPEIGGELGGPRTAK). Residues 942–962 (LLTSSLFVLLWLLYIFFSSLE) form a helical membrane-spanning segment. Residues 963 to 970 (AYCHIKGF) are Extracellular-facing.

This sequence belongs to the Ca(2+):cation antiporter (CaCA) (TC 2.A.19) family. SLC8 subfamily. As to expression, detected in heart, kidney and brain (at protein level).

The protein resides in the cell membrane. It carries out the reaction Ca(2+)(in) + 3 Na(+)(out) = Ca(2+)(out) + 3 Na(+)(in). Activated by micromolar levels of Ca(2+). In terms of biological role, mediates the exchange of one Ca(2+) ion against three to four Na(+) ions across the cell membrane, and thereby contributes to the regulation of cytoplasmic Ca(2+) levels and Ca(2+)-dependent cellular processes. Contributes to Ca(2+) transport during excitation-contraction coupling in muscle. In a first phase, voltage-gated channels mediate the rapid increase of cytoplasmic Ca(2+) levels due to release of Ca(2+) stores from the endoplasmic reticulum. SLC8A1 mediates the export of Ca(2+) from the cell during the next phase, so that cytoplasmic Ca(2+) levels rapidly return to baseline. Required for normal embryonic heart development and the onset of heart contractions. The chain is Sodium/calcium exchanger 1 (Slc8a1) from Mus musculus (Mouse).